The following is a 311-amino-acid chain: GTP cyclohydrolase MptA (311 aa).

Belongs to the GTP cyclohydrolase IV family. As to quaternary structure, homodimer. Fe(2+) serves as cofactor.

The enzyme catalyses GTP + H2O = 7,8-dihydroneopterin 2',3'-cyclic phosphate + formate + diphosphate + H(+). It functions in the pathway cofactor biosynthesis; 5,6,7,8-tetrahydromethanopterin biosynthesis. Its function is as follows. Converts GTP to 7,8-dihydro-D-neopterin 2',3'-cyclic phosphate, the first intermediate in the biosynthesis of coenzyme methanopterin. In Halobacterium salinarum (strain ATCC 29341 / DSM 671 / R1), this protein is GTP cyclohydrolase MptA.